The primary structure comprises 875 residues: Phosphoenolpyruvate carboxylase (875 aa).

Catalysis depends on residues histidine 137 and lysine 542.

Belongs to the PEPCase type 1 family. Mg(2+) is required as a cofactor.

It catalyses the reaction oxaloacetate + phosphate = phosphoenolpyruvate + hydrogencarbonate. In terms of biological role, forms oxaloacetate, a four-carbon dicarboxylic acid source for the tricarboxylic acid cycle. This Pseudomonas putida (strain GB-1) protein is Phosphoenolpyruvate carboxylase.